Consider the following 478-residue polypeptide: uncharacterized protein (478 aa).

Positions 2–120 (MNMITVIGFG…NIDKIINILE (119 aa)) constitute an RCK N-terminal domain.

This is an uncharacterized protein from Methanocaldococcus jannaschii (strain ATCC 43067 / DSM 2661 / JAL-1 / JCM 10045 / NBRC 100440) (Methanococcus jannaschii).